A 40-amino-acid chain; its full sequence is Dolichyl-diphosphooligosaccharide--protein glycosyltransferase subunit 4 (40 aa).

The Lumenal portion of the chain corresponds to 1 to 4 (MITD). Residues 5–25 (VQLAIFSNVLGVFLFLLVVAY) traverse the membrane as a helical segment. The Cytoplasmic portion of the chain corresponds to 26–40 (HYINANTGKIGPKAK).

It belongs to the OST4 family. As to quaternary structure, component of the oligosaccharyltransferase (OST) complex.

The protein resides in the endoplasmic reticulum membrane. Subunit of the oligosaccharyl transferase (OST) complex that catalyzes the initial transfer of a defined glycan (Glc(3)Man(9)GlcNAc(2) in eukaryotes) from the lipid carrier dolichol-pyrophosphate to an asparagine residue within an Asn-X-Ser/Thr consensus motif in nascent polypeptide chains, the first step in protein N-glycosylation. N-glycosylation occurs cotranslationally and the complex associates with the Sec61 complex at the channel-forming translocon complex that mediates protein translocation across the endoplasmic reticulum (ER). All subunits are required for a maximal enzyme activity. The chain is Dolichyl-diphosphooligosaccharide--protein glycosyltransferase subunit 4 from Drosophila willistoni (Fruit fly).